The primary structure comprises 98 residues: Keratin, high sulfur matrix protein, IIIB4 (98 aa).

At Ala1 the chain carries N-acetylalanine.

Belongs to the KRTAP type 3 family. In terms of assembly, interacts with wool keratins. Wool.

In terms of biological role, in the wool cortex, wool keratin intermediate filaments are embedded in an interfilamentous matrix, consisting of hair keratin-associated proteins (KRTAP), which are essential for the formation of a rigid and resistant wool shaft through their extensive disulfide bond cross-linking with abundant cysteine residues of wool keratins. The matrix proteins include the high-sulfur and high-glycine-tyrosine keratins. The chain is Keratin, high sulfur matrix protein, IIIB4 from Ovis aries (Sheep).